Reading from the N-terminus, the 448-residue chain is MSFPQLGYQYIRPLYPSDRQNVGGTRSGTELSPAGTLSNVLSSVYGTPYAAAAAAQAYGAFLPYSAELPIFPQLGSQYEMKDSPGVQHAAFSHPHAAFYPYGQYQFGDPSRPKNATRESTSTLKAWLNEHRKNPYPTKGEKIMLAIITKMTLTQVSTWFANARRRLKKENKMTWAPRSRTDEEGNAYGSDHEEDKHEDDEEIDLENIDTEDIESKEDLDDPDTDIHSDSKTDARSDSEASDGFEDLNAPEDRLLKSVVGQRQVLNEEPQDKCALSSDAKASQPACEQIKLDRIPSSPPLENNIPAAHKPKIWSLAETATTPDNPRRSPNTGGSVNTQNLIAQHRLIASPGSRFQGWTGRAFSAQQLSLLNSAHFLQGLSVSHTALGSGTASFPKAAEPKHSTDSLTDRSSTVDIEKKIPVLNTAFQPVQRRSQNQLDAAMILSALSSS.

The segment at residues 108–170 is a DNA-binding region (homeobox; TALE-type); sequence DPSRPKNATR…NARRRLKKEN (63 aa). Disordered stretches follow at residues 171 to 250 and 387 to 410; these read KMTW…NAPE and SGTASFPKAAEPKHSTDSLTDRSS. Positions 195-222 are enriched in acidic residues; sequence KHEDDEEIDLENIDTEDIESKEDLDDPD. The segment covering 223-237 has biased composition (basic and acidic residues); it reads TDIHSDSKTDARSDS. Residues 238-248 show a composition bias toward acidic residues; that stretch reads EASDGFEDLNA. Basic and acidic residues predominate over residues 396 to 406; it reads AEPKHSTDSLT.

The protein belongs to the TALE/IRO homeobox family. Expressed in the neural plate in overlapping patterns with other irx members, which all share an anterior border of expression. Outside the nervous system and at tailbud stages, expressed in the developing otic vesicle, branchial arches, prospective heart region and pronephros.

The protein localises to the nucleus. Its function is as follows. Acts partially redundantly with other irx members in neural patterning. Required for formation of the posterior forebrain, midbrain, hindbrain, and to a lesser extent, spinal cord. Both up-regulates and down-regulates gene expression during neural development. Acts early in neural plate development to induce proneural gene expression and specify a neural precursor state. Also up-regulates repressors that prevent neuronal differentiation. Required during at least two stages of pronephros kidney development; during neurula stages, maintains transcription of key renal genes to define the size and identity of the pronephric anlage, probably in part through regulation of bmp-signaling. Subsequently required for proper formation of the intermediate tubule segment of the pronephros. The polypeptide is Iroquois-class homeodomain protein irx-3 (Xenopus tropicalis (Western clawed frog)).